Consider the following 380-residue polypeptide: Kappa-type opioid receptor (380 aa).

Topologically, residues 1 to 57 (MDSPIQIFRGEPGPTCAPSACLPPNSSAWFPGWAEPDSNGSAGSEDAQLEPAHISPA) are extracellular. N-linked (GlcNAc...) asparagine glycans are attached at residues asparagine 25 and asparagine 39. Residues 58–85 (IPVIITAVYSVVFVVGLVGNSLVMFVII) traverse the membrane as a helical segment. At 86–95 (RYTKMKTATN) the chain is on the cytoplasmic side. Residues 96–119 (IYIFNLALADALVTTTMPFQSTVY) form a helical membrane-spanning segment. At 120 to 132 (LMNSWPFGDVLCK) the chain is on the extracellular side. Residues cysteine 131 and cysteine 210 are joined by a disulfide bond. A helical transmembrane segment spans residues 133–154 (IVISIDYYNMFTSIFTLTMMSV). Topologically, residues 155–173 (DRYIAVCHPVKALDFRTPL) are cytoplasmic. The chain crosses the membrane as a helical span at residues 174-196 (KAKIINICIWLLSSSVGISAIVL). At 197–222 (GGTKVREDVDVIECSLQFPDDDYSWW) the chain is on the extracellular side. A helical membrane pass occupies residues 223–247 (DLFMKICVFIFAFVIPVLIIIVCYT). Topologically, residues 248 to 274 (LMILRLKSVRLLSGSREKDRNLRRITR) are cytoplasmic. The chain crosses the membrane as a helical span at residues 275-296 (LVLVVVAVFVVCWTPIHIFILV). The Extracellular portion of the chain corresponds to 297-311 (EALGSTSHSTAALSS). Residues 312-333 (YYFCIALGYTNSSLNPILYAFL) traverse the membrane as a helical segment. Residues 334-380 (DENFKRCFRDFCFPLKMRMERQSTSRVRNTVQDPAYLRDIDGMNKPV) are Cytoplasmic-facing. The S-palmitoyl cysteine moiety is linked to residue cysteine 345.

The protein belongs to the G-protein coupled receptor 1 family. Interacts with NHERF1. Interacts with GABARAPL1. In terms of tissue distribution, detected in brain and placenta.

The protein localises to the cell membrane. G-protein coupled opioid receptor that functions as a receptor for endogenous alpha-neoendorphins and dynorphins, but has low affinity for beta-endorphins. Also functions as a receptor for various synthetic opioids and for the psychoactive diterpene salvinorin A. Ligand binding causes a conformation change that triggers signaling via guanine nucleotide-binding proteins (G proteins) and modulates the activity of down-stream effectors, such as adenylate cyclase. Signaling leads to the inhibition of adenylate cyclase activity. Inhibits neurotransmitter release by reducing calcium ion currents and increasing potassium ion conductance. Plays a role in the perception of pain. Plays a role in mediating reduced physical activity upon treatment with synthetic opioids. Plays a role in the regulation of salivation in response to synthetic opioids. May play a role in arousal and regulation of autonomic and neuroendocrine functions. The sequence is that of Kappa-type opioid receptor (OPRK1) from Homo sapiens (Human).